Here is a 223-residue protein sequence, read N- to C-terminus: DNA mismatch repair protein MutH (223 aa).

It belongs to the MutH family.

Its subcellular location is the cytoplasm. In terms of biological role, sequence-specific endonuclease that cleaves unmethylated GATC sequences. It is involved in DNA mismatch repair. The protein is DNA mismatch repair protein MutH of Shewanella sp. (strain MR-7).